The primary structure comprises 187 residues: Thioredoxin F, chloroplastic (187 aa).

Residues 1-72 (MALRLSVSSS…GSDTATVGAE (72 aa)) constitute a chloroplast transit peptide. A Thioredoxin domain is found at 73–186 (AEAVAVTGQV…LIQAIETVKS (114 aa)). Residues cysteine 111 and cysteine 114 each act as nucleophile in the active site. Cysteine 111 and cysteine 114 are joined by a disulfide.

The protein belongs to the thioredoxin family. Plant F-type subfamily.

It is found in the plastid. The protein localises to the chloroplast. Functionally, thiol-disulfide oxidoreductase involved in the redox regulation of enzymes of both reductive pentose phosphate pathway (Calvin-Benson cycle) and oxidative pentose phosphate pathway. The protein is Thioredoxin F, chloroplastic of Oryza sativa subsp. japonica (Rice).